The primary structure comprises 118 residues: Diacylglycerol kinase (118 aa).

Residue Glu28 participates in a divalent metal cation binding. 2 helical membrane passes run 29–49 and 55–75; these read TAFRHECFLACILIPLTFFLG and IILMISSVLLVMALELLNSAV. Glu69 serves as the catalytic Proton acceptor. Glu76 is an a divalent metal cation binding site. The helical transmembrane segment at 98–118 threads the bilayer; that stretch reads SASVFIALCIVGIVWGGILFF.

Belongs to the bacterial diacylglycerol kinase family. Mg(2+) is required as a cofactor.

It is found in the cell inner membrane. It carries out the reaction a 1,2-diacyl-sn-glycerol + ATP = a 1,2-diacyl-sn-glycero-3-phosphate + ADP + H(+). Its function is as follows. Catalyzes the ATP-dependent phosphorylation of sn-l,2-diacylglycerol (DAG) to phosphatidic acid. Involved in the recycling of diacylglycerol produced as a by-product during membrane-derived oligosaccharide (MDO) biosynthesis. In Haemophilus influenzae (strain ATCC 51907 / DSM 11121 / KW20 / Rd), this protein is Diacylglycerol kinase (dgkA).